We begin with the raw amino-acid sequence, 236 residues long: Uridylate kinase (236 aa).

Residue 12 to 15 participates in ATP binding; sequence KISG. Residues 20-25 form an involved in allosteric activation by GTP region; it reads GTNGYG. Glycine 54 contacts UMP. ATP-binding residues include glycine 55 and arginine 59. UMP is bound by residues aspartate 72 and 133 to 140; that span reads TGNPYFST. ATP is bound by residues tyrosine 166 and aspartate 169.

Belongs to the UMP kinase family. In terms of assembly, homohexamer.

Its subcellular location is the cytoplasm. It carries out the reaction UMP + ATP = UDP + ADP. It functions in the pathway pyrimidine metabolism; CTP biosynthesis via de novo pathway; UDP from UMP (UMPK route): step 1/1. Allosterically activated by GTP. Inhibited by UTP. Functionally, catalyzes the reversible phosphorylation of UMP to UDP. This chain is Uridylate kinase, found in Clostridium acetobutylicum (strain ATCC 824 / DSM 792 / JCM 1419 / IAM 19013 / LMG 5710 / NBRC 13948 / NRRL B-527 / VKM B-1787 / 2291 / W).